A 345-amino-acid chain; its full sequence is Selenide, water dikinase (345 aa).

Cys-16 is a catalytic residue. Residues Lys-19 and 45-47 (TSE) each bind ATP. Residue Asp-48 coordinates Mg(2+). ATP-binding positions include Asp-65, Asp-88, and 136-138 (GHT). Residue Asp-88 coordinates Mg(2+). Asp-224 contributes to the Mg(2+) binding site.

The protein belongs to the selenophosphate synthase 1 family. Class I subfamily. Homodimer. Requires Mg(2+) as cofactor.

The enzyme catalyses hydrogenselenide + ATP + H2O = selenophosphate + AMP + phosphate + 2 H(+). In terms of biological role, synthesizes selenophosphate from selenide and ATP. This is Selenide, water dikinase from Aliarcobacter butzleri (strain RM4018) (Arcobacter butzleri).